The following is a 526-amino-acid chain: MGKIIKSLSRFGKKVGNALTSNTAKKIYSTIGKAAERFAESEIGAATIDGLVQGSVHSIITGESYGESVKQAVLLNVLGTGEELPDPLSPGERGMQTKIKELEDEQRNELVRLKYNKEITEKFGKELGEVYDFMNGEAKEVEAVEEQYTMLCKAVDSYEKILKEEDSKMAILARALQREAAERSEDEIKMVKEYRQKIDALKSAIEIERDGMQEEAIQEIAGMTADVLEAASEEVPLIGAGMATAVATGRAIEGAYKLKKVINALSGIDLSHMRSPKIEPTIIATTLEHRFKDIPDEQLAISVLNKKTAVADNCNEIAHIKQEILPKFKQIMNEEKEIEGIEDKVIHPRVMMRFKIPRTQQPQIHIYAAPWDSDDVFFFHCVSYHHRNESFFLGFDLGIDVVHFEDLTSHWHALGMAQEASGRTLTEAYREFLNLSISSTFSSAIHARRMIRSRAVHPIFLGSMHYDITYEALKNNAQRIVYDDELQMHILRGPLHFQRRAILGALKFGVKILGDKIDVPLFLRNA.

The segment at 1–42 is involved in membrane permeabilization; sequence MGKIIKSLSRFGKKVGNALTSNTAKKIYSTIGKAAERFAESE.

This sequence belongs to the orbivirus VP5 family.

It localises to the virion. In terms of biological role, VP5 protein is one of the two proteins (with VP2) which constitute the virus particle outer capsid. Acts as a membrane permeabilization protein that mediates release of viral particles from endosomal compartments into the cytoplasm. Permeabilization activity is probably negatively regulated by VP2 and is triggered by endosomal degradation of VP2 and exposure to low pH. In Antilocapra americana (Pronghorn), this protein is Outer capsid protein VP5 (Segment-6).